The primary structure comprises 358 residues: Type II restriction enzyme SacI (358 aa).

It catalyses the reaction Endonucleolytic cleavage of DNA to give specific double-stranded fragments with terminal 5'-phosphates.. Functionally, a subtype P restriction enzyme that recognizes the double-stranded sequence 5'-GAGCTC-3' and cleaves after T-5. The chain is Type II restriction enzyme SacI from Streptomyces achromogenes.